Consider the following 179-residue polypeptide: Acireductone dioxygenase (179 aa).

Fe(2+) contacts are provided by His85, His87, Glu91, and His132. Residues His85, His87, Glu91, and His132 each contribute to the Ni(2+) site.

It belongs to the acireductone dioxygenase (ARD) family. It depends on Fe(2+) as a cofactor. The cofactor is Ni(2+).

The protein resides in the cytoplasm. Its subcellular location is the nucleus. The enzyme catalyses 1,2-dihydroxy-5-(methylsulfanyl)pent-1-en-3-one + O2 = 4-methylsulfanyl-2-oxobutanoate + formate + 2 H(+). It catalyses the reaction 1,2-dihydroxy-5-(methylsulfanyl)pent-1-en-3-one + O2 = 3-(methylsulfanyl)propanoate + CO + formate + 2 H(+). The protein operates within amino-acid biosynthesis; L-methionine biosynthesis via salvage pathway; L-methionine from S-methyl-5-thio-alpha-D-ribose 1-phosphate: step 5/6. Catalyzes 2 different reactions between oxygen and the acireductone 1,2-dihydroxy-3-keto-5-methylthiopentene (DHK-MTPene) depending upon the metal bound in the active site. Fe-containing acireductone dioxygenase (Fe-ARD) produces formate and 2-keto-4-methylthiobutyrate (KMTB), the alpha-ketoacid precursor of methionine in the methionine recycle pathway. Ni-containing acireductone dioxygenase (Ni-ARD) produces methylthiopropionate, carbon monoxide and formate, and does not lie on the methionine recycle pathway. In Saccharomyces cerevisiae (strain ATCC 204508 / S288c) (Baker's yeast), this protein is Acireductone dioxygenase.